Reading from the N-terminus, the 120-residue chain is UPF0102 protein Pfl01_4685 (120 aa).

It belongs to the UPF0102 family.

The protein is UPF0102 protein Pfl01_4685 of Pseudomonas fluorescens (strain Pf0-1).